The following is a 417-amino-acid chain: UDP-N-acetylglucosamine 1-carboxyvinyltransferase (417 aa).

22–23 (KN) contacts phosphoenolpyruvate. Arg-92 is a UDP-N-acetyl-alpha-D-glucosamine binding site. Cys-116 (proton donor) is an active-site residue. 2-(S-cysteinyl)pyruvic acid O-phosphothioketal is present on Cys-116. Residues 121–125 (RPIDL), Asp-306, and Ile-328 contribute to the UDP-N-acetyl-alpha-D-glucosamine site.

It belongs to the EPSP synthase family. MurA subfamily.

It is found in the cytoplasm. The enzyme catalyses phosphoenolpyruvate + UDP-N-acetyl-alpha-D-glucosamine = UDP-N-acetyl-3-O-(1-carboxyvinyl)-alpha-D-glucosamine + phosphate. Its pathway is cell wall biogenesis; peptidoglycan biosynthesis. Functionally, cell wall formation. Adds enolpyruvyl to UDP-N-acetylglucosamine. In Buchnera aphidicola subsp. Schizaphis graminum (strain Sg), this protein is UDP-N-acetylglucosamine 1-carboxyvinyltransferase.